The sequence spans 189 residues: uncharacterized protein (189 aa).

Helical transmembrane passes span 49–69 (LLGI…LFVF), 78–98 (LFHK…LSLF), 102–122 (LTIV…FPMI), and 124–144 (VSIA…LFPA). Residues 165 to 189 (SSSAPDLNYPSLPTQSASPSQRFSA) form a disordered region.

The protein belongs to the chlamydial CPn_0442/CT_006/TC_0274 family.

The protein resides in the cell membrane. This is an uncharacterized protein from Chlamydia trachomatis serovar D (strain ATCC VR-885 / DSM 19411 / UW-3/Cx).